A 319-amino-acid polypeptide reads, in one-letter code: Acetyl-coenzyme A carboxylase carboxyl transferase subunit alpha (319 aa).

The CoA carboxyltransferase C-terminal domain occupies lysine 39–glycine 293.

This sequence belongs to the AccA family. In terms of assembly, acetyl-CoA carboxylase is a heterohexamer composed of biotin carboxyl carrier protein (AccB), biotin carboxylase (AccC) and two subunits each of ACCase subunit alpha (AccA) and ACCase subunit beta (AccD).

It localises to the cytoplasm. The enzyme catalyses N(6)-carboxybiotinyl-L-lysyl-[protein] + acetyl-CoA = N(6)-biotinyl-L-lysyl-[protein] + malonyl-CoA. The protein operates within lipid metabolism; malonyl-CoA biosynthesis; malonyl-CoA from acetyl-CoA: step 1/1. Component of the acetyl coenzyme A carboxylase (ACC) complex. First, biotin carboxylase catalyzes the carboxylation of biotin on its carrier protein (BCCP) and then the CO(2) group is transferred by the carboxyltransferase to acetyl-CoA to form malonyl-CoA. The protein is Acetyl-coenzyme A carboxylase carboxyl transferase subunit alpha of Parvibaculum lavamentivorans (strain DS-1 / DSM 13023 / NCIMB 13966).